The primary structure comprises 134 residues: Cytochrome b (134 aa).

3 helical membrane passes run F33–M53, W77–V98, and W113–L133. Residues H83 and H97 each contribute to the heme b site.

The protein belongs to the cytochrome b family. As to quaternary structure, the cytochrome bc1 complex contains 11 subunits: 3 respiratory subunits (MT-CYB, CYC1 and UQCRFS1), 2 core proteins (UQCRC1 and UQCRC2) and 6 low-molecular weight proteins (UQCRH/QCR6, UQCRB/QCR7, UQCRQ/QCR8, UQCR10/QCR9, UQCR11/QCR10 and a cleavage product of UQCRFS1). This cytochrome bc1 complex then forms a dimer. Heme b is required as a cofactor.

Its subcellular location is the mitochondrion inner membrane. In terms of biological role, component of the ubiquinol-cytochrome c reductase complex (complex III or cytochrome b-c1 complex) that is part of the mitochondrial respiratory chain. The b-c1 complex mediates electron transfer from ubiquinol to cytochrome c. Contributes to the generation of a proton gradient across the mitochondrial membrane that is then used for ATP synthesis. The polypeptide is Cytochrome b (MT-CYB) (Microtus subterraneus (European pine vole)).